Reading from the N-terminus, the 72-residue chain is Translation initiation factor IF-1 (72 aa).

Positions 1–72 constitute an S1-like domain; that stretch reads MSKEGKITLK…TRGRIIYRIS (72 aa).

It belongs to the IF-1 family. Component of the 30S ribosomal translation pre-initiation complex which assembles on the 30S ribosome in the order IF-2 and IF-3, IF-1 and N-formylmethionyl-tRNA(fMet); mRNA recruitment can occur at any time during PIC assembly.

The protein resides in the cytoplasm. One of the essential components for the initiation of protein synthesis. Stabilizes the binding of IF-2 and IF-3 on the 30S subunit to which N-formylmethionyl-tRNA(fMet) subsequently binds. Helps modulate mRNA selection, yielding the 30S pre-initiation complex (PIC). Upon addition of the 50S ribosomal subunit IF-1, IF-2 and IF-3 are released leaving the mature 70S translation initiation complex. The chain is Translation initiation factor IF-1 from Malacoplasma penetrans (strain HF-2) (Mycoplasma penetrans).